The chain runs to 304 residues: MIRQRTLKNTIRATGVGLHTGEKVYVMLRPAPVDTGVVFRRMDLEPPVEIKASPDNVGDTRLSTTLVNGEVRVSTVEHLLSAIAGLGIDNLYVEVSAAEVPIMDGSAGPFVFLIQSAGIVEQEAPKKFIRIKRAVEVREDDKWARFEPFDGFKVGFSIDFQHPIFSNGVQTAELDFSTTSFVKEVSRARTFGFMRDIEMLRERQLALGGSLDNAIVLDDFRILNEDGLRYEDEFVKHKILDAIGDLYLLGHSLVGAFTGFKSGHALNNRLIRTLIAQEDAWECITFEDENESAPISYAQPVTAF.

His78, His237, and Asp241 together coordinate Zn(2+). His264 functions as the Proton donor in the catalytic mechanism.

Belongs to the LpxC family. It depends on Zn(2+) as a cofactor.

It carries out the reaction a UDP-3-O-[(3R)-3-hydroxyacyl]-N-acetyl-alpha-D-glucosamine + H2O = a UDP-3-O-[(3R)-3-hydroxyacyl]-alpha-D-glucosamine + acetate. The protein operates within glycolipid biosynthesis; lipid IV(A) biosynthesis; lipid IV(A) from (3R)-3-hydroxytetradecanoyl-[acyl-carrier-protein] and UDP-N-acetyl-alpha-D-glucosamine: step 2/6. Functionally, catalyzes the hydrolysis of UDP-3-O-myristoyl-N-acetylglucosamine to form UDP-3-O-myristoylglucosamine and acetate, the committed step in lipid A biosynthesis. The chain is UDP-3-O-acyl-N-acetylglucosamine deacetylase from Thioalkalivibrio sulfidiphilus (strain HL-EbGR7).